Reading from the N-terminus, the 430-residue chain is Adenylosuccinate synthetase (430 aa).

Residues Gly-13–Lys-19 and Gly-41–Thr-43 contribute to the GTP site. Asp-14 functions as the Proton acceptor in the catalytic mechanism. Mg(2+) is bound by residues Asp-14 and Gly-41. Residues Asp-14–Lys-17, Asn-39–His-42, Thr-130, Arg-144, Gln-225, Thr-240, and Arg-304 contribute to the IMP site. The active-site Proton donor is His-42. Ala-300–Arg-306 is a substrate binding site. Residues Arg-306, Lys-332 to Asp-334, and Ser-414 to Gly-416 each bind GTP.

It belongs to the adenylosuccinate synthetase family. In terms of assembly, homodimer. Mg(2+) serves as cofactor.

Its subcellular location is the cytoplasm. It carries out the reaction IMP + L-aspartate + GTP = N(6)-(1,2-dicarboxyethyl)-AMP + GDP + phosphate + 2 H(+). Its pathway is purine metabolism; AMP biosynthesis via de novo pathway; AMP from IMP: step 1/2. Its function is as follows. Plays an important role in the de novo pathway of purine nucleotide biosynthesis. Catalyzes the first committed step in the biosynthesis of AMP from IMP. In Pseudomonas fluorescens (strain ATCC BAA-477 / NRRL B-23932 / Pf-5), this protein is Adenylosuccinate synthetase.